The sequence spans 294 residues: RNA exonuclease 4 (294 aa).

A compositionally biased stretch (polar residues) spans 1–13; sequence MVLSSNWLSLQKS. Residues 1 to 56 are disordered; it reads MVLSSNWLSLQKSTDSDSVNKNKGGKKTKSNSKKRTVSVKKDKQYVDKKKKNGTGS. Positions 23-38 are enriched in basic residues; it reads KGGKKTKSNSKKRTVS. In terms of domain architecture, Exonuclease spans 119 to 271; sequence YVSMDCEFVG…EDARATMLLY (153 aa).

It belongs to the REXO4 family.

Its subcellular location is the nucleus. Functionally, exoribonuclease involved in ribosome biosynthesis. Involved in the processing of ITS1, the internal transcribed spacer localized between the 18S and 5.8S rRNAs. The polypeptide is RNA exonuclease 4 (REX4) (Kluyveromyces lactis (strain ATCC 8585 / CBS 2359 / DSM 70799 / NBRC 1267 / NRRL Y-1140 / WM37) (Yeast)).